Reading from the N-terminus, the 149-residue chain is Large ribosomal subunit protein eL19 (149 aa).

A disordered region spans residues Val45 to Gly130. The span at Asn58–Ala85 shows a compositional bias: basic residues. Basic and acidic residues predominate over residues Asn90–Gly113.

It belongs to the eukaryotic ribosomal protein eL19 family. Part of the 50S ribosomal subunit.

Its function is as follows. Binds to the 23S rRNA. Located at the polypeptide exit tunnel on the outside of the subunit. This is Large ribosomal subunit protein eL19 from Haloarcula marismortui (strain ATCC 43049 / DSM 3752 / JCM 8966 / VKM B-1809) (Halobacterium marismortui).